Consider the following 1907-residue polypeptide: Receptor-type tyrosine-protein phosphatase F (1907 aa).

Residues 1–29 form the signal peptide; the sequence is MAPEPAPGRTMVPLVPALVMLGLVAGAHG. The Extracellular segment spans residues 30–1263; it reads DSKPVFIKVP…QQQEEPEMLW (1234 aa). Ig-like C2-type domains lie at 33-123, 135-224, and 232-314; these read PVFI…AKLS, PSID…ANLY, and PRFS…AQVT. An intrachain disulfide couples cysteine 54 to cysteine 107. 68–77 lines the heparin pocket; that stretch reads KKGKKVSSQR. The N-linked (GlcNAc...) asparagine glycan is linked to asparagine 117. Cysteine 156 and cysteine 207 are disulfide-bonded. Residues asparagine 250 and asparagine 295 are each glycosylated (N-linked (GlcNAc...) asparagine). Cysteine 253 and cysteine 298 are oxidised to a cystine. Fibronectin type-III domains follow at residues 321-411, 416-510, 514-604, 609-706, 711-819, 820-914, 918-1010, and 1014-1098; these read PPID…TGEQ, PPRR…TQQG, QPAD…TAQS, PPQK…TDED, PPRK…TTGA, VPGR…PEDL, FPQN…TMPV, and FAKN…TAPD. Residues 398–417 are disordered; sequence GPPSEAVRARTGEQAPSSPP. Residues 693-712 are disordered; that stretch reads GPESSPVLVRTDEDVPSGPP. Asparagine 721 carries an N-linked (GlcNAc...) asparagine glycan. Asparagine 966 is a glycosylation site (N-linked (GlcNAc...) asparagine). A helical transmembrane segment spans residues 1264 to 1284; the sequence is VTGPVLAVILIILIVIAILLF. The Cytoplasmic segment spans residues 1285–1907; it reads KRKRTHSPSS…YLGSFDHYAT (623 aa). Position 1305 is a phosphoserine (serine 1305). Tyrosine-protein phosphatase domains lie at 1352–1607 and 1639–1898; these read FSQE…LLEA and MELE…ALEY. Residues aspartate 1516, 1548 to 1554, and glutamine 1592 each bind substrate; that span reads CSAGVGR. Cysteine 1548 acts as the Phosphocysteine intermediate in catalysis. The active-site Phosphocysteine intermediate is the cysteine 1839.

This sequence belongs to the protein-tyrosine phosphatase family. Receptor class 2A subfamily. In terms of assembly, interacts with GRIP1. Interacts with PPFIA1, PPFIA2 and PPFIA3. Interacts with INSR.

Its subcellular location is the membrane. The enzyme catalyses O-phospho-L-tyrosyl-[protein] + H2O = L-tyrosyl-[protein] + phosphate. Functionally, possible cell adhesion receptor. It possesses an intrinsic protein tyrosine phosphatase activity (PTPase) and dephosphorylates EPHA2 regulating its activity. The first PTPase domain has enzymatic activity, while the second one seems to affect the substrate specificity of the first one. This Homo sapiens (Human) protein is Receptor-type tyrosine-protein phosphatase F (PTPRF).